Consider the following 331-residue polypeptide: MLQQLWYGKSGWRWLLAPFALLFAILSGARRFAYRRGWCKAYRATVPVVVVGNISVGGNGKTPVVIWLVEQLQARGFRPGVVSRGYGGKAPHYPYRLDAASTTAQAGDEPVLIARRSGCPVVVAPKRADAVRLLEQSGEVDIIITDDGLQHYGLARDIELVVVDGVRRFGNACLLPMGPLREPVTRLKRVDAIICNGGEPAKGEYAMRLVADVPRRVRDDAQATEPLPRAVDALAGIGHPPRFFATLAGLGYELHQQVGYGDHHAFDRDELVARFGQRPLLMTEKDAVKCRTFALDSWWYLPVSAELPASLLDTLLQKLPSLTVPRSGSGL.

Residue 55-62 participates in ATP binding; sequence SVGGNGKT.

It belongs to the LpxK family.

It catalyses the reaction a lipid A disaccharide + ATP = a lipid IVA + ADP + H(+). It functions in the pathway glycolipid biosynthesis; lipid IV(A) biosynthesis; lipid IV(A) from (3R)-3-hydroxytetradecanoyl-[acyl-carrier-protein] and UDP-N-acetyl-alpha-D-glucosamine: step 6/6. Functionally, transfers the gamma-phosphate of ATP to the 4'-position of a tetraacyldisaccharide 1-phosphate intermediate (termed DS-1-P) to form tetraacyldisaccharide 1,4'-bis-phosphate (lipid IVA). The protein is Tetraacyldisaccharide 4'-kinase of Aeromonas salmonicida (strain A449).